The primary structure comprises 403 residues: GTPase Obg (403 aa).

The Obg domain occupies 1-159 (MKFIDESLIR…RDLLLELMLL (159 aa)). The OBG-type G domain maps to 160–333 (ADVGMLGFPN…LCRDIMDFII (174 aa)). Residues 166–173 (GFPNAGKS), 191–195 (FTTLV), 213–216 (DIPG), 283–286 (NKID), and 314–316 (SAA) each bind GTP. Mg(2+)-binding residues include serine 173 and threonine 193. Residues 363–403 (EYQFDDDEDWDDDWTEEDDDEDWDDDWTEEDDEGIEFIYKP) are disordered. The span at 365–397 (QFDDDEDWDDDWTEEDDDEDWDDDWTEEDDEGI) shows a compositional bias: acidic residues.

Belongs to the TRAFAC class OBG-HflX-like GTPase superfamily. OBG GTPase family. Monomer. Mg(2+) is required as a cofactor.

Its subcellular location is the cytoplasm. An essential GTPase which binds GTP, GDP and possibly (p)ppGpp with moderate affinity, with high nucleotide exchange rates and a fairly low GTP hydrolysis rate. Plays a role in control of the cell cycle, stress response, ribosome biogenesis and in those bacteria that undergo differentiation, in morphogenesis control. This Haemophilus influenzae (strain PittEE) protein is GTPase Obg.